A 129-amino-acid chain; its full sequence is Small ribosomal subunit protein bS6 (129 aa).

Basic and acidic residues predominate over residues Phe110–Thr121. The disordered stretch occupies residues Phe110–Glu129.

Belongs to the bacterial ribosomal protein bS6 family.

Functionally, binds together with bS18 to 16S ribosomal RNA. The sequence is that of Small ribosomal subunit protein bS6 from Aeromonas salmonicida (strain A449).